The primary structure comprises 191 residues: Dephospho-CoA kinase (191 aa).

One can recognise a DPCK domain in the interval 3–191 (AIGITGSYAS…NLIANLECRV (189 aa)). 11-16 (ASGKTF) lines the ATP pocket.

This sequence belongs to the CoaE family.

It is found in the cytoplasm. It catalyses the reaction 3'-dephospho-CoA + ATP = ADP + CoA + H(+). It participates in cofactor biosynthesis; coenzyme A biosynthesis; CoA from (R)-pantothenate: step 5/5. Its function is as follows. Catalyzes the phosphorylation of the 3'-hydroxyl group of dephosphocoenzyme A to form coenzyme A. The polypeptide is Dephospho-CoA kinase (Rickettsia bellii (strain RML369-C)).